A 441-amino-acid polypeptide reads, in one-letter code: 2-oxoisovalerate dehydrogenase subunit alpha, mitochondrial (441 aa).

The N-terminal 17 residues, 1 to 17 (MISQSYRILSRISRNNE), are a transit peptide targeting the mitochondrion. Thiamine diphosphate is bound at residue 145 to 147 (QYR). Residues Ser194, Thr199, and Gln200 each coordinate K(+).

Belongs to the BCKDHA family. Heterotetramer of alpha and beta chains. Requires thiamine diphosphate as cofactor.

It is found in the mitochondrion matrix. The enzyme catalyses N(6)-[(R)-lipoyl]-L-lysyl-[protein] + 3-methyl-2-oxobutanoate + H(+) = N(6)-[(R)-S(8)-2-methylpropanoyldihydrolipoyl]-L-lysyl-[protein] + CO2. The branched-chain alpha-keto dehydrogenase complex catalyzes the overall conversion of alpha-keto acids to acyl-CoA and CO(2). It contains multiple copies of three enzymatic components: branched-chain alpha-keto acid decarboxylase (E1), lipoamide acyltransferase (E2) and lipoamide dehydrogenase (E3). The protein is 2-oxoisovalerate dehydrogenase subunit alpha, mitochondrial (bkdA) of Dictyostelium discoideum (Social amoeba).